Reading from the N-terminus, the 238-residue chain is MGRKWANIVAKKTAKDGANSKVYAKFGVEIYVAAKKGDPDPESNSALKFVIDRAKQAQVPKHIIDKAIDKAKGNTDETFTEGRYEGFGPNGSMLIVDTLTSNVNRTAANVRAAFGKNGGNMGASGSVSYLFDNKGVIVFGGEDADAVFEQLLEADVDVDDVEAQEGTITVYTAPTDLHKAIVALRESGIEEFQVTELEMIPQSEVELSGEDLETFEKLYSVLEDDEDVQKIYTNVDGF.

It belongs to the TACO1 family. YeeN subfamily.

The protein localises to the cytoplasm. The chain is Probable transcriptional regulatory protein SPD_1725 from Streptococcus pneumoniae serotype 2 (strain D39 / NCTC 7466).